A 705-amino-acid chain; its full sequence is Complement C1r subcomponent (705 aa).

An N-terminal signal peptide occupies residues 1–17; the sequence is MWLLYLLVPALFCRAGG. The CUB 1 domain maps to 18-141; it reads SIPIPQKLFG…KGFLAYYQAV (124 aa). Glu-66, Asp-74, and Asp-119 together coordinate Ca(2+). Cys-71 and Cys-89 are joined by a disulfide. A glycan (N-linked (GlcNAc...) asparagine) is linked at Asn-125. Residues Asp-142, Leu-143, and Glu-145 each contribute to the Ca(2+) site. The region spanning 142-190 is the EGF-like; calcium-binding domain; the sequence is DLDECASRSKSGEEDPQPQCQHLCHNYVGGYFCSCRPGYELQEDTHSCQ. Intrachain disulfides connect Cys-146–Cys-165, Cys-161–Cys-174, Cys-176–Cys-189, and Cys-193–Cys-220. Ca(2+)-binding residues include Asn-167, Tyr-168, and Gly-171. Asn-167 bears the (3R)-3-hydroxyasparagine mark. The CUB 2 domain maps to 193–305; the sequence is CSSELYTEAS…RGWKLRYTTE (113 aa). At Ser-206 the chain carries Phosphoserine; by CK2. N-linked (GlcNAc...) asparagine glycosylation is present at Asn-221. Positions 243, 253, 290, and 294 each coordinate Ca(2+). Cys-250 and Cys-268 are joined by a disulfide. 2 Sushi domains span residues 307–373 and 374–449; these read IKCP…RCKI and KDCG…RCLP. Intrachain disulfides connect Cys-309–Cys-358, Cys-338–Cys-371, Cys-376–Cys-429, Cys-406–Cys-447, and Cys-451–Cys-577. In terms of domain architecture, Peptidase S1 spans 464–702; it reads IIGGQKAKMG…YVDWIKKEME (239 aa). His-502 acts as the Charge relay system in catalysis. An N-linked (GlcNAc...) asparagine glycan is attached at Asn-514. Asp-557 acts as the Charge relay system in catalysis. A glycan (N-linked (GlcNAc...) asparagine) is linked at Asn-581. 2 cysteine pairs are disulfide-bonded: Cys-620–Cys-639 and Cys-650–Cys-680. Catalysis depends on Ser-654, which acts as the Charge relay system.

It belongs to the peptidase S1 family. In terms of assembly, core component of the complement C1 complex, a calcium-dependent complex composed of 1 molecule of the C1Q subcomplex, 2 molecules of C1R and 2 molecules of C1S. The C1Q subcomplex is composed 18 subunits: 3 chains of C1QA, C1QB, and C1QC trimerize to form 6 collagen-like triple helices connected to six globular ligand-recognition modules. Within the C1 complex, C1R is a dimer of identical chains, each of which is activated by cleavage into two chains, heavy and light, connected by disulfide bonds. In terms of processing, cleaved and activated by autocatalytic processing to generate Complement C1r subcomponent heavy and light chains that are connected by disulfide bonds. Post-translationally, the iron and 2-oxoglutarate dependent 3-hydroxylation of aspartate and asparagine is (R) stereospecific within EGF domains.

It is found in the secreted. The protein resides in the cell surface. The enzyme catalyses Selective cleavage of Lys(or Arg)-|-Ile bond in complement subcomponent C1s to form the active form of C1s (EC 3.4.21.42).. Its activity is regulated as follows. Activated by the C1Q subcomplex of the C1 complex following C1Q binding to immunoglobulins (IgG or IgM) complexed with antigens to form antigen-antibody complexes on the surface of pathogens. Immunoglobulin-binding promotes autoactivation of C1R, which results in the cleavage of the Arg-Ile bond in the catalytic domain. Serine protease component of the complement C1 complex, a multiprotein complex that initiates the classical pathway of the complement system, a cascade of proteins that leads to phagocytosis and breakdown of pathogens and signaling that strengthens the adaptive immune system. C1R catalyzes the first enzymatic step in the classical complement pathway: it is activated by the C1Q subcomplex of the C1 complex, which associates with IgG or IgM immunoglobulins complexed with antigens to form antigen-antibody complexes on the surface of pathogens. Immunoglobulin-binding promotes the autocatalytic cleavage and activation of C1R. Activated C1R then cleaves and activates C1S, the second protease of the classical complement pathway. It is unclear if C1R activates C1S within single, strained C1 complexes or between neighboring C1 complexes on surfaces. The protein is Complement C1r subcomponent of Homo sapiens (Human).